Here is a 329-residue protein sequence, read N- to C-terminus: Large ribosomal subunit protein uL3 (329 aa).

This sequence belongs to the universal ribosomal protein uL3 family. As to quaternary structure, part of the 50S ribosomal subunit. Forms a cluster with proteins L14 and L24e.

Functionally, one of the primary rRNA binding proteins, it binds directly near the 3'-end of the 23S rRNA, where it nucleates assembly of the 50S subunit. The chain is Large ribosomal subunit protein uL3 from Picrophilus torridus (strain ATCC 700027 / DSM 9790 / JCM 10055 / NBRC 100828 / KAW 2/3).